Consider the following 62-residue polypeptide: uncharacterized protein (62 aa).

Polar residues predominate over residues 1–13 (MGESKSPQESSSE). Positions 1–62 (MGESKSPQES…SRREFRRKSG (62 aa)) are disordered. Positions 14–28 (GETKRKFREALDRKM) are enriched in basic and acidic residues.

This is an uncharacterized protein from Mycobacterium tuberculosis (strain ATCC 25618 / H37Rv).